The primary structure comprises 226 residues: MNRLFGRGKPKEPGPSLNDCIAGVDARATNIEEKISNLEAELRKYREQMSKMREGPAKNSVKQKALRVLKQKKAYEQQAESLRNQSFNMEQANYAAQSLKDTQATVAAMKDGVKQMKTEYKKINIDQIEDIQDDMADMFEQADEVQEALGRTYGMPEVDDDDLQAELDALGDEIALDDDTSYLDDVVKAPEAPSREPGADSIVPGKSTIETDEFGLPKIPTSLKTT.

Residues 21–93 (IAGVDARATN…NQSFNMEQAN (73 aa)) are a coiled coil. The segment covering 188–198 (KAPEAPSREPG) has biased composition (basic and acidic residues). Positions 188-226 (KAPEAPSREPGADSIVPGKSTIETDEFGLPKIPTSLKTT) are disordered. Ser-201 is subject to Phosphoserine. Thr-226 is modified (phosphothreonine).

It belongs to the SNF7 family. As to quaternary structure, probable peripherally associated component of the endosomal sorting required for transport complex III (ESCRT-III).

The protein resides in the endosome membrane. Probable peripherally associated component of the endosomal sorting required for transport complex III (ESCRT-III) which is involved in multivesicular bodies (MVBs) formation and sorting of endosomal cargo proteins into MVBs. MVBs contain intraluminal vesicles (ILVs) that are generated by invagination and scission from the limiting membrane of the endosome and are delivered to lysosomes enabling degradation of membrane proteins. Specifically down-regulates Notch signaling activity in the germarium, probably by facilitating Notch endocytosis. The polypeptide is Charged multivesicular body protein 5 (Drosophila melanogaster (Fruit fly)).